We begin with the raw amino-acid sequence, 157 residues long: Endoribonuclease YbeY (157 aa).

Residues H114, H118, and H124 each coordinate Zn(2+).

It belongs to the endoribonuclease YbeY family. The cofactor is Zn(2+).

The protein localises to the cytoplasm. Single strand-specific metallo-endoribonuclease involved in late-stage 70S ribosome quality control and in maturation of the 3' terminus of the 16S rRNA. The polypeptide is Endoribonuclease YbeY (Yersinia pestis).